A 409-amino-acid chain; its full sequence is Arginine deiminase (409 aa).

Cysteine 399 functions as the Amidino-cysteine intermediate in the catalytic mechanism.

The protein belongs to the arginine deiminase family.

The protein resides in the cytoplasm. The catalysed reaction is L-arginine + H2O = L-citrulline + NH4(+). Its pathway is amino-acid degradation; L-arginine degradation via ADI pathway; carbamoyl phosphate from L-arginine: step 1/2. The sequence is that of Arginine deiminase from Streptococcus pneumoniae serotype 19F (strain G54).